We begin with the raw amino-acid sequence, 176 residues long: MSRIGLKVIEVPEKVTVTKNGDDITVKGPKGELTRYFDPRITFEQKDGEIHFSRSSEADKALHGTERANLASMIEGVTDGYVKKLTLVGVGYRAVAQGKKLTLNVGYSHPVVFEAPEGVTVKTPSATSIEIEGISKQVVGQFAAEIRDVRPPEPYKGKGIRYEDEYVRRKEGKTGK.

It belongs to the universal ribosomal protein uL6 family. Part of the 50S ribosomal subunit.

This protein binds to the 23S rRNA, and is important in its secondary structure. It is located near the subunit interface in the base of the L7/L12 stalk, and near the tRNA binding site of the peptidyltransferase center. This is Large ribosomal subunit protein uL6 from Lactobacillus gasseri (strain ATCC 33323 / DSM 20243 / BCRC 14619 / CIP 102991 / JCM 1131 / KCTC 3163 / NCIMB 11718 / NCTC 13722 / AM63).